We begin with the raw amino-acid sequence, 127 residues long: Glycine cleavage system H protein (127 aa).

Residues 22-104 (EVVIGITHFA…YEGAWMVKVE (83 aa)) form the Lipoyl-binding domain. Lys63 is subject to N6-lipoyllysine.

The protein belongs to the GcvH family. As to quaternary structure, the glycine cleavage system is composed of four proteins: P, T, L and H. Requires (R)-lipoate as cofactor.

The glycine cleavage system catalyzes the degradation of glycine. The H protein shuttles the methylamine group of glycine from the P protein to the T protein. Its function is as follows. Is also involved in protein lipoylation via its role as an octanoyl/lipoyl carrier protein intermediate. The protein is Glycine cleavage system H protein of Bacillus cereus (strain G9842).